The sequence spans 106 residues: ATP-dependent Clp protease adapter protein ClpS (106 aa).

The segment at 1–20 (MKVDMSTSVKDDAQLEASRV) is disordered.

Belongs to the ClpS family. As to quaternary structure, binds to the N-terminal domain of the chaperone ClpA.

Involved in the modulation of the specificity of the ClpAP-mediated ATP-dependent protein degradation. The polypeptide is ATP-dependent Clp protease adapter protein ClpS (Chromobacterium violaceum (strain ATCC 12472 / DSM 30191 / JCM 1249 / CCUG 213 / NBRC 12614 / NCIMB 9131 / NCTC 9757 / MK)).